The primary structure comprises 384 residues: MTTHLFTSESVSEGHPDKIADQISDAVLDAILEQDPKARVACETYVKTGMVMVGGEITTKAWVDIEEITRKTVREIGYTSSDMGFDANSCAVISAIGKQSPDINQGVDRADPLEQGAGDQGLMFGYATNETDVLMPAPITYAHRLVQRQAQVRKNGTLPWLRPDAKSQITFQYDNNNIVGIDAVVLSTQHAEDISQKDLHEAVMEEIIKPILPTEWLNEQTKYFINPTGRFVIGGPMGDCGLTGRKIIVDTYGGMARHGGGAFSGKDPSKVDRSAAYAARYVAKNIVAAGLADRCEIQVSYAIGVAEPTSIMVETFGTEKIPTSQLILLVREFFDLRPYGLIQMLDLLHPIYQKTAAYGHFGRAEFPWEATDKAEILREAAGLK.

Histidine 15 contributes to the ATP binding site. Mg(2+) is bound at residue aspartate 17. Glutamate 43 provides a ligand contact to K(+). L-methionine is bound by residues glutamate 56 and glutamine 99. The interval 99–109 (QSPDINQGVDR) is flexible loop. ATP contacts are provided by residues 164 to 166 (DAK), 230 to 231 (RF), aspartate 239, 245 to 246 (RK), alanine 262, and lysine 266. Aspartate 239 is a binding site for L-methionine. Residue lysine 270 participates in L-methionine binding.

Belongs to the AdoMet synthase family. Homotetramer; dimer of dimers. Mg(2+) is required as a cofactor. Requires K(+) as cofactor.

It localises to the cytoplasm. It carries out the reaction L-methionine + ATP + H2O = S-adenosyl-L-methionine + phosphate + diphosphate. Its pathway is amino-acid biosynthesis; S-adenosyl-L-methionine biosynthesis; S-adenosyl-L-methionine from L-methionine: step 1/1. Its function is as follows. Catalyzes the formation of S-adenosylmethionine (AdoMet) from methionine and ATP. The overall synthetic reaction is composed of two sequential steps, AdoMet formation and the subsequent tripolyphosphate hydrolysis which occurs prior to release of AdoMet from the enzyme. The sequence is that of S-adenosylmethionine synthase from Proteus mirabilis (strain HI4320).